Reading from the N-terminus, the 269-residue chain is Tryptophan synthase alpha chain (269 aa).

Catalysis depends on proton acceptor residues glutamate 49 and aspartate 60.

Belongs to the TrpA family. In terms of assembly, tetramer of two alpha and two beta chains.

It catalyses the reaction (1S,2R)-1-C-(indol-3-yl)glycerol 3-phosphate + L-serine = D-glyceraldehyde 3-phosphate + L-tryptophan + H2O. It functions in the pathway amino-acid biosynthesis; L-tryptophan biosynthesis; L-tryptophan from chorismate: step 5/5. In terms of biological role, the alpha subunit is responsible for the aldol cleavage of indoleglycerol phosphate to indole and glyceraldehyde 3-phosphate. The sequence is that of Tryptophan synthase alpha chain from Photobacterium profundum (strain SS9).